The chain runs to 435 residues: NAD-specific glutamate dehydrogenase A (435 aa).

A disordered region spans residues 1–28 (MTMASKSDSTHDESGDEAADSTEPESAL). A compositionally biased stretch (acidic residues) spans 14 to 23 (SGDEAADSTE). Residue Lys-126 is part of the active site.

Belongs to the Glu/Leu/Phe/Val dehydrogenases family. In terms of assembly, homohexamer. In terms of processing, the N-terminus is blocked.

It catalyses the reaction L-glutamate + NAD(+) + H2O = 2-oxoglutarate + NH4(+) + NADH + H(+). Its activity is regulated as follows. Inhibited by ethanol, acetone, acetonitrile and 2-propanol (65 to 70% inhibition) and to a lesser extent by methanol and dimethyl formamide (26 and 49 % inhibition respectively). No effect of glycerol or DMSO. In Halobacterium salinarum (Halobacterium halobium), this protein is NAD-specific glutamate dehydrogenase A (gdhX).